Consider the following 444-residue polypeptide: MFIKRCSRSIFLQVVIGLVIGVLCGVGIPDLAVQMKPLGDGFIKLIKMLIALIVFCVVVNGISGAGDLKKVGRIGLKSVIYFEILTTIALVLGLVVAYSLGLGSGANIHLNELPAGDIALYTGRTQEIHGPVAFLMGLIPTSVFSAFAENDILQVLLFSVLFGSALNLVGEQASGVARLINEFSHIVFRIMGMIVRLAPLGVFGAVAFTTARYGVDSLSHLGALVLVFYATCLVFVMAVLGSVLRLSGVRMLPFLRYFREELLIVMGTASSDAVLPQVMRKLEHMGIRSSTVGLVIPTGYSFNLDGFSIYLTLAVVFIAHVTGTPLAMTDLLTILLVSLVTSKGAHGIPGSALVILAATLTAVPAIPVAGLVLVLSVDWFMGIGRALTNLIGNCVATVTIARWENDIDLPRAQAILDGRLEAPTRTGGEPLERGVVAGEGKLQG.

The next 9 helical transmembrane spans lie at 9-29 (SIFLQVVIGLVIGVLCGVGIP), 42-62 (FIKLIKMLIALIVFCVVVNGI), 78-98 (SVIYFEILTTIALVLGLVVAY), 152-172 (ILQVLLFSVLFGSALNLVGEQ), 190-210 (IMGMIVRLAPLGVFGAVAFTT), 221-241 (LGALVLVFYATCLVFVMAVLG), 307-327 (FSIYLTLAVVFIAHVTGTPLA), 354-374 (VILAATLTAVPAIPVAGLVLV), and 380-400 (FMGIGRALTNLIGNCVATVTI).

It belongs to the dicarboxylate/amino acid:cation symporter (DAACS) (TC 2.A.23) family.

The protein resides in the cell inner membrane. Functionally, responsible for the transport of dicarboxylates such as succinate, fumarate, and malate from the periplasm across the membrane. This Pseudomonas paraeruginosa (strain DSM 24068 / PA7) (Pseudomonas aeruginosa (strain PA7)) protein is C4-dicarboxylate transport protein 1.